Consider the following 102-residue polypeptide: Large ribosomal subunit protein bL21 (102 aa).

It belongs to the bacterial ribosomal protein bL21 family. In terms of assembly, part of the 50S ribosomal subunit. Contacts protein L20.

Functionally, this protein binds to 23S rRNA in the presence of protein L20. This chain is Large ribosomal subunit protein bL21, found in Cutibacterium acnes (strain DSM 16379 / KPA171202) (Propionibacterium acnes).